A 229-amino-acid chain; its full sequence is Large ribosomal subunit protein uL1 (229 aa).

The protein belongs to the universal ribosomal protein uL1 family. Part of the 50S ribosomal subunit.

In terms of biological role, binds directly to 23S rRNA. The L1 stalk is quite mobile in the ribosome, and is involved in E site tRNA release. Protein L1 is also a translational repressor protein, it controls the translation of the L11 operon by binding to its mRNA. In Phenylobacterium zucineum (strain HLK1), this protein is Large ribosomal subunit protein uL1.